The sequence spans 478 residues: Probable serine carboxypeptidase CPVL (478 aa).

Positions 1–22 (MVRAKWKMVVSLILFMVSPGDG) are cleaved as a signal peptide. Residues Asn-83 and Asn-134 are each glycosylated (N-linked (GlcNAc...) asparagine). Residue Ser-206 is part of the active site. Residues Asn-309 and Asn-350 are each glycosylated (N-linked (GlcNAc...) asparagine). Active-site residues include Asp-390 and His-450.

This sequence belongs to the peptidase S10 family.

Its function is as follows. May be involved in the digestion of phagocytosed particles in the lysosome, participation in an inflammatory protease cascade, and trimming of peptides for antigen presentation. This Mus musculus (Mouse) protein is Probable serine carboxypeptidase CPVL (Cpvl).